Consider the following 971-residue polypeptide: U2 snRNP component HSH155 (971 aa).

2 disordered regions span residues 1 to 22 (MSHP…LGGQ) and 54 to 118 (TRTV…AVKE). The segment covering 8-22 (VNANNSDKSHQLGGQ) has biased composition (polar residues). A compositionally biased stretch (basic and acidic residues) spans 54-75 (TRTVQNREDSYHKRRFDMKFEP). The segment covering 78-90 (DTQTVTSSENTQD) has biased composition (polar residues). 9 HEAT repeats span residues 199-237 (MIFN…DLTK), 273-310 (AGLK…ALGV), 350-387 (NHLT…NSYP), 513-550 (LGCS…LLGT), 596-633 (PFLA…VIKN), 680-717 (PPIN…LAPT), 722-759 (KEWM…AIGP), 792-829 (CGPY…YIGN), and 832-870 (KDYI…NCSG).

Belongs to the SF3B1 family. In terms of assembly, belongs to the CWC complex (or CEF1-associated complex), a spliceosome sub-complex reminiscent of a late-stage spliceosome composed of the U2, U5 and U6 snRNAs and at least BUD13, BUD31, BRR2, CDC40, CEF1, CLF1, CUS1, CWC2, CWC15, CWC21, CWC22, CWC23, CWC24, CWC25, CWC27, ECM2, HSH155, IST3, ISY1, LEA1, MSL1, NTC20, PRP8, PRP9, PRP11, PRP19, PRP21, PRP22, PRP45, PRP46, SLU7, SMB1, SMD1, SMD2, SMD3, SMX2, SMX3, SNT309, SNU114, SPP2, SYF1, SYF2, RSE1 and YJU2. Interacts with RDS3.

The protein localises to the nucleus. Contacts pre-mRNA on both sides of the branch site early in spliceosome assembly. This Saccharomyces cerevisiae (strain ATCC 204508 / S288c) (Baker's yeast) protein is U2 snRNP component HSH155 (HSH155).